Reading from the N-terminus, the 53-residue chain is Dihydrolipoyl dehydrogenase (53 aa).

Residues 35 to 44 (EKYPTFGGTC) and Lys-53 contribute to the FAD site. Cysteines 44 and 49 form a disulfide.

Belongs to the class-I pyridine nucleotide-disulfide oxidoreductase family. Homodimer. The cofactor is FAD.

Its subcellular location is the mitochondrion. It carries out the reaction N(6)-[(R)-dihydrolipoyl]-L-lysyl-[protein] + NAD(+) = N(6)-[(R)-lipoyl]-L-lysyl-[protein] + NADH + H(+). Its activity is regulated as follows. Lipoamide reduction and the NADH -&gt; NAD reaction are both completely inhibited by copper and cadmium ions. Functionally, lipoamide dehydrogenase is a component of the glycine cleavage system as well as of the alpha-ketoacid dehydrogenase complexes. This enzyme has lipoamide dehydrogenase activity and NADH -&gt; NAD transhydrogenation activity. Also displays some NADH-ferricyanide reductase and NADPH -&gt; NAD transydrogenation activities. This chain is Dihydrolipoyl dehydrogenase, found in Hymenolepis diminuta (Rat tapeworm).